The sequence spans 189 residues: dCTP deaminase, dUMP-forming (189 aa).

DCTP contacts are provided by residues 101-106, aspartate 119, 127-129, glutamine 148, tyrosine 162, and glutamine 174; these read KSSLGR and TLE. Glutamate 129 (proton donor/acceptor) is an active-site residue. Residues 163-189 are disordered; the sequence is GSSEAGSKYQGQRGPTPSKAYLNFNRS.

It belongs to the dCTP deaminase family. As to quaternary structure, homotrimer.

It catalyses the reaction dCTP + 2 H2O = dUMP + NH4(+) + diphosphate. Its pathway is pyrimidine metabolism; dUMP biosynthesis; dUMP from dCTP: step 1/1. Bifunctional enzyme that catalyzes both the deamination of dCTP to dUTP and the hydrolysis of dUTP to dUMP without releasing the toxic dUTP intermediate. This is dCTP deaminase, dUMP-forming from Rhodococcus erythropolis (strain PR4 / NBRC 100887).